The sequence spans 533 residues: Calcium/calmodulin-dependent protein kinase type II (533 aa).

ATP contacts are provided by residues 18 to 26 and K41; that span reads LGKGAFSVV. Residue D134 is the Proton acceptor of the active site. T284 is subject to Phosphothreonine; by autocatalysis. 2 stretches are compositionally biased toward polar residues: residues 316-345 and 377-391; these read TSDSTGSVASNGSTTHDTSQIAGTSSQPTS and PPSTIKESSESSQTI. Disordered regions lie at residues 316 to 347 and 369 to 400; these read TSDSTGSVASNGSTTHDTSQIAGTSSQPTSPA and LLNKKEQGPPSTIKESSESSQTIDDNDSEKAQ.

Belongs to the protein kinase superfamily. CAMK Ser/Thr protein kinase family. CaMK subfamily. In terms of assembly, dodecamer. Subunits are tightly packed around a central ring-shaped scaffold with extensive contacts between the regulatory segment of one kinase and the catalytic domain of another enabling cooperative activation of a subunit by the adjacent molecule. Interacts with and phosphorylates daf-16; the interaction promotes daf-16 nuclear localization. Interacts with egl-2 and tir-1. Interacts with nsy-1. Mg(2+) is required as a cofactor.

Its subcellular location is the cytoplasm. It localises to the cell projection. The protein localises to the axon. It is found in the perikaryon. It catalyses the reaction L-seryl-[protein] + ATP = O-phospho-L-seryl-[protein] + ADP + H(+). It carries out the reaction L-threonyl-[protein] + ATP = O-phospho-L-threonyl-[protein] + ADP + H(+). Ca(2+)/calmodulin binding removes an autoinhibitory regulatory segment located C-terminal to the kinase domain. This releases the catalytic activity of the enzyme and makes accessible a regulatory residue Thr-284. Phosphorylation of Thr-284 by another kinase domain within the oligomeric holoenzyme keeps CaMKII active in the absence of Ca(2+)/calmodulin by preventing the rebinding of the regulatory segment to the kinase domain and by increasing the affinity of calmodulin for the enzyme. Can respond to high-frequency Ca(2+) pulses to become Ca(2+) independent. Role in locomotion and neuronal cell fate specification. Required for the regulation of synaptic density, egg laying, defecation, and meiotic maturation. Required for viability under chronic osmotic stress in which it acts downstream of osr-1. Regulates the synaptic trafficking of glr-1. Bidirectional modulator of neurotransmitter release with negative modulatory effects mainly mediated via slo-1 activation. May suppress the functional response to an internal pacemaker, perhaps by modulating the activity of the IP3 receptor. The chain is Calcium/calmodulin-dependent protein kinase type II from Caenorhabditis briggsae.